Reading from the N-terminus, the 202-residue chain is Myosin regulatory light chain 10 (202 aa).

A disordered region spans residues 1-21 (MGQSSLDHGVQGPVAGTGDFG). EF-hand domains lie at 60–95 (SQIQ…LGRI), 130–165 (DPEE…QADR), and 166–201 (FSEE…GEEK). The Ca(2+) site is built by Asp73, Asn75, Asp77, and Asp84.

As to quaternary structure, myosin is a hexamer of 2 heavy chains and 4 light chains. As to expression, specifically expressed in precursor B- and T-lymphocytes.

This chain is Myosin regulatory light chain 10 (Myl10), found in Mus musculus (Mouse).